A 183-amino-acid chain; its full sequence is Disulfide bond formation protein B 2 (183 aa).

At 1-9 the chain is on the cytoplasmic side; it reads MSLACSRSL. A helical transmembrane segment spans residues 10–26; the sequence is FFMAFTAGILALGASYY. At 27 to 44 the chain is on the periplasmic side; that stretch reads LEYAVGLVPCSLCLVQRL. Residues Cys36 and Cys39 are joined by a disulfide bond. A helical membrane pass occupies residues 45–61; sequence FMSVLTLCCGLAAVHGP. Residues 62 to 68 are Cytoplasmic-facing; the sequence is QRVGLSL. A helical transmembrane segment spans residues 69–85; sequence YWMVTLLSSLGGTTAAW. The Periplasmic segment spans residues 86-142; it reads RQVLFQSDSLQELAHCAPNPEEMFSSLPWLCALMRMFNDTADCAELSWTLFDLSIPE. Cys101 and Cys128 are disulfide-bonded. Residues 143–161 form a helical membrane-spanning segment; it reads WSLLFFVGMSILAVYQLLR. The Cytoplasmic segment spans residues 162–183; the sequence is QVWMALQRPLSGQPSHPALVRD.

This sequence belongs to the DsbB family.

The protein resides in the cell inner membrane. In terms of biological role, required for disulfide bond formation in some periplasmic proteins. Acts by oxidizing the DsbA protein. The chain is Disulfide bond formation protein B 2 from Pseudomonas fluorescens (strain Pf0-1).